Consider the following 238-residue polypeptide: Probable transcriptional regulatory protein YeeN (238 aa).

It belongs to the TACO1 family. YeeN subfamily.

The protein resides in the cytoplasm. The polypeptide is Probable transcriptional regulatory protein YeeN (Shigella sonnei (strain Ss046)).